Reading from the N-terminus, the 55-residue chain is Potassium channel toxin alpha-KTX 12 Sp2 (55 aa).

Positions 1–18 (MRLAIILLLMTTIVLTIG) are cleaved as a signal peptide. Intrachain disulfides connect Cys-26-Cys-46, Cys-32-Cys-51, and Cys-36-Cys-53.

This sequence belongs to the short scorpion toxin superfamily. Potassium channel inhibitor family. Alpha-KTx 12 subfamily. As to expression, expressed by the venom gland.

It is found in the secreted. Functionally, blocks mouse voltage-gated potassium channels Kv1.3/KCNA3 (IC(50)=0.3-30 nM), when the channel is expressed in Jurkat T cells or in HEK293 cells. Also shows a weaker inhibition on mKv1.2/KCNA2 (IC(50)=56.9 nM) and mKv1.1/KCNA1 (IC(50)=485 nM). Probably through the inhibition of both Kv1.2/KCNA2 and Kv1.3/KCNA3, the toxin also reduces the free calcium concentration in Jurkat T cells, inhibits the activation of Jurkat T cells and reduces the release of inflammatory cytokines interleukin-2, showing a strong immunosuppressant effect. This Scorpiops pococki (Scorpion) protein is Potassium channel toxin alpha-KTX 12 Sp2.